Consider the following 319-residue polypeptide: Cobalamin biosynthesis protein CobD (319 aa).

A run of 4 helical transmembrane segments spans residues 56 to 76, 153 to 173, 204 to 224, and 290 to 310; these read GLWI…LWLM, VDGV…LAMA, LANW…AWFI, and IPLS…LFAL.

It belongs to the CobD/CbiB family.

The protein resides in the cell membrane. It participates in cofactor biosynthesis; adenosylcobalamin biosynthesis. In terms of biological role, converts cobyric acid to cobinamide by the addition of aminopropanol on the F carboxylic group. The polypeptide is Cobalamin biosynthesis protein CobD (Photorhabdus laumondii subsp. laumondii (strain DSM 15139 / CIP 105565 / TT01) (Photorhabdus luminescens subsp. laumondii)).